Consider the following 79-residue polypeptide: RNA-binding protein KhpA (79 aa).

Residues 32–79 (FLEYHLNLDQSDVGRVIGRKGRTISAIRTIVYSVPTEYKKVRIVIDEK) form the KH domain.

Belongs to the KhpA RNA-binding protein family. In terms of assembly, forms a complex with KhpB. KhpA and KhpB colocalize throughout the cell cycle, with some increase at midcell in dividing cells.

The protein resides in the cytoplasm. In terms of biological role, a probable RNA chaperone. Forms a complex with KhpB which presumably binds to about 170 cellular RNAs (mRNA, tRNA intergenic RNA and sRNAs); the proteins alone each bind the same set of RNAs. A mutation in this gene suppresses the requirement for PBP2b (penA, a transpeptidase) in peripheral peptidoglycan (PG) synthesis. Probably plays a role in PG homeostasis and regulating peripheral PG synthesis. In Streptococcus pneumoniae serotype 2 (strain D39 / NCTC 7466), this protein is RNA-binding protein KhpA.